We begin with the raw amino-acid sequence, 1249 residues long: Cilia- and flagella-associated protein 57 (1249 aa).

WD repeat units lie at residues 105-148 (FQVQ…AIIK), 195-233 (GESS…WETS), 335-374 (SDKQ…ISKG), 386-425 (LHSA…LELY), 427-469 (EYQE…KEYS), 471-506 (RGCK…NINI), 509-548 (GHTG…RETE), and 635-674 (AHAG…GRGI). Coiled-coil stretches lie at residues 690 to 1056 (KTDM…KTDL) and 1094 to 1165 (SDLQ…SALK).

This sequence belongs to the CFAP57 family. As to quaternary structure, may form homodimers. Associates with components of the nexin-dynein regulatory complex (N-DRC) and the CFAP184:CFAP263 complex. In terms of tissue distribution, predominanly expressed in testis, lung and skin. Weak expression in brain and kidney.

The protein resides in the cytoplasm. The protein localises to the cytoskeleton. It is found in the cilium axoneme. Functionally, associates with components of the nexin-dynein regulatory complex (N-DRC), a key regulator of ciliary/flagellar motility, and might act as an inner dynein arm (IDA) hub or linkage. This is Cilia- and flagella-associated protein 57 from Mus musculus (Mouse).